Consider the following 283-residue polypeptide: 1-acyl-sn-glycerol-3-phosphate acyltransferase alpha (283 aa).

Residues 1–26 (MDLWPGAWMLLLLLFLLLLFLLPTLW) form the signal peptide. Residues 27 to 37 (FCSPSAKYFFK) lie on the Lumenal side of the membrane. Residues 38 to 58 (MAFYNGWILFLAVLAIPVCAV) traverse the membrane as a helical segment. At 59–127 (RGRNVENMKI…PGRCVPIAKR (69 aa)) the chain is on the cytoplasmic side. An HXXXXD motif motif is present at residues 104–109 (HQSSLD). Residues 128 to 148 (ELLWAGSAGLACWLAGVIFID) form a helical membrane-spanning segment. Over 149 to 283 (RKRTGDAISV…DYLKKPGGGG (135 aa)) the chain is Lumenal. The EGTR motif motif lies at 178 to 181 (EGTR).

This sequence belongs to the 1-acyl-sn-glycerol-3-phosphate acyltransferase family. In terms of tissue distribution, widely expressed. Expressed in adipose tissue and at high levels in testis and pancreas. Expressed at lower levels in tissues such as heart, brain, placenta, kidney, lung, spleen, thymus, prostate, ovary, intestine, colon, leukocyte and liver.

The protein resides in the endoplasmic reticulum membrane. It carries out the reaction a 1-acyl-sn-glycero-3-phosphate + an acyl-CoA = a 1,2-diacyl-sn-glycero-3-phosphate + CoA. The catalysed reaction is 1-(9Z-octadecenoyl)-sn-glycero-3-phosphate + (9Z)-octadecenoyl-CoA = 1,2-di-(9Z-octadecenoyl)-sn-glycero-3-phosphate + CoA. The enzyme catalyses 1-(9Z-octadecenoyl)-sn-glycero-3-phosphate + hexadecanoyl-CoA = 1-(9Z)-octadecenoyl-2-hexadecanoyl-sn-glycero-3-phosphate + CoA. It catalyses the reaction heptadecanoyl-CoA + 1-(9Z-octadecenoyl)-sn-glycero-3-phosphate = 1-(9Z)-octadecenoyl-2-heptadecanoyl-sn-glycero-3-phosphate + CoA. It carries out the reaction 1-(9Z-octadecenoyl)-sn-glycero-3-phosphate + octadecanoyl-CoA = 1-(9Z-octadecenoyl)-2-octadecanoyl-sn-glycero-3-phosphate + CoA. The catalysed reaction is 1-(9Z-octadecenoyl)-sn-glycero-3-phosphate + (9Z,12Z)-octadecadienoyl-CoA = 1-(9Z)-octadecenoyl-2-(9Z,12Z)-octadecadienoyl-sn-glycero-3-phosphate + CoA. The enzyme catalyses 1-(9Z-octadecenoyl)-sn-glycero-3-phosphate + tetradecanoyl-CoA = 1-(9Z)-octadecenoyl-2-tetradecanoyl-sn-glycero-3-phosphate + CoA. It catalyses the reaction pentadecanoyl-CoA + 1-(9Z-octadecenoyl)-sn-glycero-3-phosphate = 1-(9Z)-octadecenoyl-2-pentadecanoyl-sn-glycero-3-phosphate + CoA. It carries out the reaction 1-hexadecanoyl-sn-glycero-3-phosphate + (9Z)-octadecenoyl-CoA = 1-hexadecanoyl-2-(9Z-octadecenoyl)-sn-glycero-3-phosphate + CoA. The catalysed reaction is 1-(9Z,12Z,15Z)-octadecatrienoyl-sn-glycero-3-phosphate + (9Z)-octadecenoyl-CoA = 1-(9Z,12Z,15Z)-octadecatrienoyl-2-(9Z)-octadecenoyl-sn-glycero-3-phosphate + CoA. The enzyme catalyses 1-(6Z,9Z,12Z-octadecatrienoyl)-sn-glycero-3-phosphate + (9Z)-octadecenoyl-CoA = (6Z,9Z,12Z)-octadecatrienoyl-2-(9Z)-octadecenoyl-sn-glycero-3-phosphate + CoA. It catalyses the reaction 1-eicosanoyl-sn-glycero-3-phosphate + (9Z)-octadecenoyl-CoA = 1-eicosanoyl-2-(9Z)-octadecenoyl-sn-glycero-3-phosphate + CoA. It carries out the reaction 1-tetradecanoyl-sn-glycerol 3-phosphate + (9Z)-octadecenoyl-CoA = 1-tetradecanoyl-2-(9Z)-octadecenoyl-sn-glycero-3-phosphate + CoA. The catalysed reaction is 1-(9Z-octadecenoyl)-sn-glycero-3-phosphate + (5Z,8Z,11Z,14Z)-eicosatetraenoyl-CoA = 1-(9Z)-octadecenoyl-2-(5Z,8Z,11Z,14Z)-eicosatetraenoyl-sn-glycero-3-phosphate + CoA. The enzyme catalyses 1-(9Z-octadecenoyl)-sn-glycero-3-phosphate + dodecanoyl-CoA = 1-(9Z)-octadecenoyl-2-dodecanoyl-sn-glycero-3-phosphate + CoA. It catalyses the reaction (6Z)-octadecenoyl-CoA + 1-(9Z-octadecenoyl)-sn-glycero-3-phosphate = 1-(9Z)-octadecenoyl-2-(6Z)-octadecenoyl-sn-glycero-3-phosphate + CoA. It carries out the reaction (11Z)-octadecenoyl-CoA + 1-(9Z-octadecenoyl)-sn-glycero-3-phosphate = 1-(9Z)-octadecenoyl-2-(11Z)-octadecenoyl-sn-glycero-3-phosphate + CoA. The catalysed reaction is (9Z)-hexadecenoyl-CoA + 1-(9Z-octadecenoyl)-sn-glycero-3-phosphate = 1-(9Z-octadecenoyl)-2-(9Z-hexadecenoyl)-sn-glycero-3-phosphate + CoA. It participates in phospholipid metabolism; CDP-diacylglycerol biosynthesis; CDP-diacylglycerol from sn-glycerol 3-phosphate: step 2/3. Its function is as follows. Converts 1-acyl-sn-glycerol-3-phosphate (lysophosphatidic acid or LPA) into 1,2-diacyl-sn-glycerol-3-phosphate (phosphatidic acid or PA) by incorporating an acyl moiety at the sn-2 position of the glycerol backbone. This Homo sapiens (Human) protein is 1-acyl-sn-glycerol-3-phosphate acyltransferase alpha (AGPAT1).